Consider the following 44-residue polypeptide: Thrombin-like enzyme F202 (44 aa).

In terms of domain architecture, Peptidase S1 spans 1–44; the sequence is VVGGDECNINEHRFLVALYANSSLLCGGTLINQEWVLIAAHCDR. Cysteine 26 and cysteine 42 are disulfide-bonded. The Charge relay system role is filled by histidine 41.

It belongs to the peptidase S1 family. Snake venom subfamily. In terms of assembly, monomer. In terms of processing, contains 6 disulfide bonds. As to expression, expressed by the venom gland.

The protein localises to the secreted. With respect to regulation, enzyme activity is markedly inhibited by TLCK and PMSF, and moderately by SBTi. Platelet aggregating activity is strongly inhibited by TLCK. In terms of biological role, thrombin-like snake venom serine protease that coagulates fibrinogen by inducing a fast degradation of the alpha chain (FGA) from human citrated plasma, and a slow degradation of beta chain (FGB). Potently induces platelet aggregation in both platelet rich plasma and washed platelet preparations in a concentration-dependent fashion. Shows amidolytic activities. The polypeptide is Thrombin-like enzyme F202 (Crotalus durissus cascavella (Northeastern Brazilian rattlesnake)).